A 274-amino-acid chain; its full sequence is Putative hydro-lyase Veis_4744 (274 aa).

It belongs to the D-glutamate cyclase family.

This chain is Putative hydro-lyase Veis_4744, found in Verminephrobacter eiseniae (strain EF01-2).